The sequence spans 133 residues: Interferon-induced transmembrane protein 3 (133 aa).

The Cytoplasmic portion of the chain corresponds to Met-1–His-57. Tyr-20 carries the phosphotyrosine modification. A Glycyl lysine isopeptide (Lys-Gly) (interchain with G-Cter in ubiquitin) cross-link involves residue Lys-24. The helical intramembrane region spans Val-58–Phe-78. The interaction with SPP1 stretch occupies residues Trp-60 to Val-93. Residues Cys-71 and Cys-72 are each lipidated (S-palmitoyl cysteine). At Ala-79–Asn-107 the chain is on the cytoplasmic side. Residues Lys-83, Lys-88, and Lys-104 each participate in a glycyl lysine isopeptide (Lys-Gly) (interchain with G-Cter in ubiquitin) cross-link. Residue Cys-105 is the site of S-palmitoyl cysteine attachment. Residues Ile-108 to Ile-128 form a helical membrane-spanning segment. The segment at Ile-108–Gly-133 is interaction with VAPA. The Extracellular portion of the chain corresponds to Phe-129–Gly-133.

It belongs to the CD225/Dispanin family. Interacts with ATP6V0B. Interacts with CD81. Interacts with SPP1; the interaction reduces OPN expression. Interacts with VAPA. Interacts with BRI3 (isoforms 1 and 2); the interaction with isoform 2 is weaker than with isoform 1. Post-translationally, palmitoylation on membrane-proximal cysteines controls clustering in membrane compartments and antiviral activity against influenza virus and hepatitis C virus (HCV). Has no effect on anti-SARS-CoV-2 activity. Not glycosylated. In terms of processing, polyubiquitinated with both 'Lys-48' and 'Lys-63' linkages. Ubiquitination negatively regulates antiviral activity. Lys-24 is the most prevalent ubiquitination site. Post-translationally, phosphorylation at Tyr-20 is required for endosomal and lysosomal location.

The protein resides in the cell membrane. Its subcellular location is the late endosome membrane. It is found in the early endosome membrane. The protein localises to the lysosome membrane. It localises to the cytoplasm. The protein resides in the perinuclear region. Its function is as follows. IFN-induced antiviral protein which disrupts intracellular cholesterol homeostasis. Inhibits the entry of viruses to the host cell cytoplasm by preventing viral fusion with cholesterol depleted endosomes. May inactivate new enveloped viruses which buds out of the infected cell, by letting them go out with a cholesterol depleted membrane. Active against multiple viruses, including influenza A virus, SARS coronaviruses (SARS-CoV and SARS-CoV-2), Marburg virus (MARV), Ebola virus (EBOV), Dengue virus (DNV), West Nile virus (WNV), human immunodeficiency virus type 1 (HIV-1), hepatitis C virus (HCV) and vesicular stomatitis virus (VSV). Can inhibit: influenza virus hemagglutinin protein-mediated viral entry, MARV and EBOV GP1,2-mediated viral entry, SARS-CoV and SARS-CoV-2 S protein-mediated viral entry and VSV G protein-mediated viral entry. Plays a critical role in the structural stability and function of vacuolar ATPase (v-ATPase). Establishes physical contact with the v-ATPase of endosomes which is critical for proper clathrin localization and is also required for the function of the v-ATPase to lower the pH in phagocytic endosomes thus establishing an antiviral state. In hepatocytes, IFITM proteins act in a coordinated manner to restrict HCV infection by targeting the endocytosed HCV virion for lysosomal degradation. IFITM2 and IFITM3 display anti-HCV activity that may complement the anti-HCV activity of IFITM1 by inhibiting the late stages of HCV entry, possibly in a coordinated manner by trapping the virion in the endosomal pathway and targeting it for degradation at the lysosome. Exerts opposing activities on SARS-CoV-2, including amphipathicity-dependent restriction of virus at endosomes and amphipathicity-independent enhancement of infection at the plasma membrane. This is Interferon-induced transmembrane protein 3 from Homo sapiens (Human).